A 667-amino-acid chain; its full sequence is MIASCLYYLLLPAARLFRFLSDAFFTCRKNALLAKSSSPQVEGNFAMAPRGPDQEECEGLLQQWREEGWNQTLSTASEGPLADKGLAESSLALLMDNSGEQDTASEDKWSSRQLSDLRAADNLDQPFPEVLGEEPLAEDEGPLWAAVPVQTGPQYADCAVLPMGAMAAEQWEEDPAMVAWSIAPEPMPQEETSMWPFEGLEQLQPPPMEIPYHEILWREWEDFSTQPDAQGLEAGDGPQFQFTLMSYNILAQDLMQQSSELYLHCHPDILNWNYRFANLMQEFQHWDPDILCLQEVQEDHYWEQLEPSLRMMGFTCFYKRRTGCKTDGCAVCYKPTRFRLLCASPVEYFRPGLELLNRDNVGLVLLLQPLVPEGLGQVSVAPLCVANTHVLYNPRRGDVKLAQMAILLAEVDKVARLSDGSHCPIILCGDLNSVPDSPLYNFIRDGELQYNGMPAWKVSGQEDFSHQLYQRKLQAPLWPSSLGITDCCQYVTSCHPKRSERLKYGRDFLLRFRFCDLACQRPVGLVLMEGVTDTKPDRPAGWAECIFEEEISELEPVFPRTIGTIQHCLHLTSVYTHFLPQHGRPEVTTMPLGLGMTVDYIFFSAESCENENRSDHRLDRDGTLKLLGRLSLLSEEILWAANGLPNPFYSSDHLCLLASFGMEVTAP.

Phosphoserine is present on residues Ser-77 and Ser-105.

It belongs to the CCR4/nocturin family.

In Rattus norvegicus (Rat), this protein is Protein angel homolog 1.